Here is a 271-residue protein sequence, read N- to C-terminus: Centromere protein K (271 aa).

2 coiled-coil regions span residues 11-44 (DTITDVEAVIDTEEELIKECEEMWKDMEDCQNKL) and 102-151 (LRCD…VENQ).

Belongs to the CENP-K/MCM22 family. In terms of assembly, component of the CENPA-CAD complex, composed of CENPI, CENPK, CENPL, CENPO, CENPP, CENPQ, CENPR and CENPS. The CENPA-CAD complex interacts with the CENPA-NAC complex, at least composed of CENPA, CENPC, CENPH, CENPM, CENPN, CENPT and CENPU. May interact with Sox6. As to expression, highly expressed in testis.

The protein resides in the nucleus. It localises to the chromosome. Its subcellular location is the centromere. The protein localises to the kinetochore. Its function is as follows. Component of the CENPA-CAD (nucleosome distal) complex, a complex recruited to centromeres which is involved in assembly of kinetochore proteins, mitotic progression and chromosome segregation. May be involved in incorporation of newly synthesized CENPA into centromeres via its interaction with the CENPA-NAC complex. Acts in coordination with KNL1 to recruit the NDC80 complex to the outer kinetochore. The sequence is that of Centromere protein K (Cenpk) from Mus musculus (Mouse).